We begin with the raw amino-acid sequence, 209 residues long: High frequency lysogenization protein HflD homolog (209 aa).

Belongs to the HflD family.

It is found in the cytoplasm. It localises to the cell inner membrane. The chain is High frequency lysogenization protein HflD homolog from Halorhodospira halophila (strain DSM 244 / SL1) (Ectothiorhodospira halophila (strain DSM 244 / SL1)).